A 107-amino-acid chain; its full sequence is Replication protein A 14 kDa subunit A (107 aa).

At M1 the chain carries N-acetylmethionine.

It belongs to the replication factor A protein 3 family. In terms of assembly, component of the heterotrimeric canonical replication protein A complex (RPA).

The protein localises to the nucleus. Its function is as follows. As part of the replication protein A (RPA/RP-A), a single-stranded DNA-binding heterotrimeric complex, may play an essential role in DNA replication, recombination and repair. Binds and stabilizes single-stranded DNA intermediates, preventing complementary DNA reannealing and recruiting different proteins involved in DNA metabolism. In Arabidopsis thaliana (Mouse-ear cress), this protein is Replication protein A 14 kDa subunit A (RPA3A).